We begin with the raw amino-acid sequence, 369 residues long: tRNA/tmRNA (uracil-C(5))-methyltransferase (369 aa).

S-adenosyl-L-methionine contacts are provided by Q192, Y221, N226, E242, and D302. C327 (nucleophile) is an active-site residue. The active-site Proton acceptor is the E361.

It belongs to the class I-like SAM-binding methyltransferase superfamily. RNA M5U methyltransferase family. TrmA subfamily.

It carries out the reaction uridine(54) in tRNA + S-adenosyl-L-methionine = 5-methyluridine(54) in tRNA + S-adenosyl-L-homocysteine + H(+). It catalyses the reaction uridine(341) in tmRNA + S-adenosyl-L-methionine = 5-methyluridine(341) in tmRNA + S-adenosyl-L-homocysteine + H(+). Functionally, dual-specificity methyltransferase that catalyzes the formation of 5-methyluridine at position 54 (m5U54) in all tRNAs, and that of position 341 (m5U341) in tmRNA (transfer-mRNA). This Haemophilus ducreyi (strain 35000HP / ATCC 700724) protein is tRNA/tmRNA (uracil-C(5))-methyltransferase.